A 439-amino-acid polypeptide reads, in one-letter code: Acyl transferase 4 (439 aa).

Catalysis depends on proton acceptor residues histidine 166 and aspartate 382.

The protein belongs to the plant acyltransferase family.

Grass-specific monolignol p-coumaroyl transferase involved in the biosynthesis of acylated monolignols or monolignol conjugates that serve as monomer precursors of lignin. Can synthesize sinapyl p-coumarate, p-coumaryl p-coumarate, sinapyl caffeate and p-coumaryl caffeate in vitro. The sequence is that of Acyl transferase 4 from Oryza sativa subsp. japonica (Rice).